The following is a 785-amino-acid chain: Mitochondrial intermediate peptidase (785 aa).

The transit peptide at 1–43 (MLTRPAQNALLKSMQPLFRFRGCLLAKSTSTPRRDISTSSRKL) directs the protein to the mitochondrion. Residue H567 participates in Zn(2+) binding. The active site involves E568. 2 residues coordinate Zn(2+): H571 and H574.

It belongs to the peptidase M3 family. The cofactor is Zn(2+).

It is found in the mitochondrion matrix. The enzyme catalyses Release of an N-terminal octapeptide as second stage of processing of some proteins imported into the mitochondrion.. Functionally, cleaves proteins, imported into the mitochondrion, to their mature size. While most mitochondrial precursor proteins are processed to the mature form in one step by mitochondrial processing peptidase (MPP), the sequential cleavage by MIP of an octapeptide after initial processing by MPP is a required step for a subgroup of nuclear-encoded precursor proteins destined for the matrix or the inner membrane. The protein is Mitochondrial intermediate peptidase (OCT1) of Pleurotus djamor (Pink oyster mushroom).